The primary structure comprises 90 residues: DNA-directed RNA polymerase subunit omega (90 aa).

This sequence belongs to the RNA polymerase subunit omega family. As to quaternary structure, the RNAP catalytic core consists of 2 alpha, 1 beta, 1 beta' and 1 omega subunit. When a sigma factor is associated with the core the holoenzyme is formed, which can initiate transcription.

It catalyses the reaction RNA(n) + a ribonucleoside 5'-triphosphate = RNA(n+1) + diphosphate. Functionally, promotes RNA polymerase assembly. Latches the N- and C-terminal regions of the beta' subunit thereby facilitating its interaction with the beta and alpha subunits. This is DNA-directed RNA polymerase subunit omega from Beutenbergia cavernae (strain ATCC BAA-8 / DSM 12333 / CCUG 43141 / JCM 11478 / NBRC 16432 / NCIMB 13614 / HKI 0122).